The primary structure comprises 242 residues: N-alpha-acetyltransferase 60 (242 aa).

The Cytoplasmic segment spans residues 1–192 (MSEEERPAAL…GGHPPWTVMD (192 aa)). Residues 13 to 182 (TILRFLCHDD…DAYTYVLYLN (170 aa)) form the N-acetyltransferase domain. Tyrosine 38 lines the substrate pocket. Tyrosine 97 is an active-site residue. Leucine 99 provides a ligand contact to substrate. Residues 101 to 103 (LGV) and 109 to 114 (KQGIGS) each bind acetyl-CoA. The active site involves histidine 138. Residues asparagine 143 and 150 to 153 (YENR) contribute to the acetyl-CoA site. The tract at residues 162–173 (PYYYSIRGVLQD) is required for homodimerization. Tyrosine 165 is a binding site for substrate. An intramembrane region (helical) is located at residues 193–236 (YLQHLGSALAGFSPCTLPQRIYRQAHTLLRSLLPWSSISAKSGI). The Cytoplasmic segment spans residues 237 to 242 (EYSRTM).

It belongs to the acetyltransferase family. NAA60 subfamily. Monomer and homodimer; monomer in presence of substrate and homodimer in its absence.

The protein localises to the golgi apparatus membrane. It carries out the reaction N-terminal L-methionyl-[transmembrane protein] + acetyl-CoA = N-terminal N(alpha)-acetyl-L-methionyl-[transmembrane protein] + CoA + H(+). The enzyme catalyses L-lysyl-[protein] + acetyl-CoA = N(6)-acetyl-L-lysyl-[protein] + CoA + H(+). In terms of biological role, N-alpha-acetyltransferase that specifically mediates the acetylation of N-terminal residues of the transmembrane proteins, with a strong preference for N-termini facing the cytosol. Displays N-terminal acetyltransferase activity towards a range of N-terminal sequences including those starting with Met-Lys, Met-Val, Met-Ala and Met-Met. Required for normal chromosomal segregation during anaphase. May also show histone acetyltransferase activity; such results are however unclear in vivo and would require additional experimental evidences. The chain is N-alpha-acetyltransferase 60 (naa60) from Xenopus tropicalis (Western clawed frog).